A 367-amino-acid polypeptide reads, in one-letter code: Ribosomal lysine N-methyltransferase 5 (367 aa).

Residues 55–74 (EGGRKKKRVRRRNKASSVEE) are disordered. Over residues 58–68 (RKKKRVRRRNK) the composition is skewed to basic residues. S-adenosyl-L-methionine-binding positions include tryptophan 110, 170–172 (GAG), aspartate 192, tryptophan 256, and methionine 288.

This sequence belongs to the class I-like SAM-binding methyltransferase superfamily. RKM5 family.

In terms of biological role, S-adenosyl-L-methionine-dependent protein-lysine N-methyltransferase that monomethylates 60S ribosomal protein L1 (RPL1A and RPL1B) at 'Lys-46'. The protein is Ribosomal lysine N-methyltransferase 5 (RKM5) of Saccharomyces cerevisiae (strain AWRI796) (Baker's yeast).